A 140-amino-acid polypeptide reads, in one-letter code: uncharacterized protein (140 aa).

This is an uncharacterized protein from Sinorhizobium fredii (strain NBRC 101917 / NGR234).